We begin with the raw amino-acid sequence, 335 residues long: Glucokinase (335 aa).

Residue 11 to 16 coordinates ATP; sequence ADIGGT.

This sequence belongs to the bacterial glucokinase family.

It is found in the cytoplasm. The enzyme catalyses D-glucose + ATP = D-glucose 6-phosphate + ADP + H(+). The polypeptide is Glucokinase (Xanthomonas oryzae pv. oryzae (strain MAFF 311018)).